We begin with the raw amino-acid sequence, 149 residues long: uncharacterized protein (149 aa).

Residues 1-11 (MTKESKPDRLR) are compositionally biased toward basic and acidic residues. The segment at 1-20 (MTKESKPDRLRQMGALNPKP) is disordered.

This is an uncharacterized protein from Sinorhizobium fredii (strain NBRC 101917 / NGR234).